Here is a 555-residue protein sequence, read N- to C-terminus: uncharacterized protein (555 aa).

An N-terminal signal peptide occupies residues 1–28 (MRSGLFGVLRWTAVGLVATLVASLALTA). A lipid anchor (N-palmitoyl cysteine) is attached at Cys29. Cys29 is lipidated: S-diacylglycerol cysteine.

This sequence to M.tuberculosis Rv2585c and M.bovis Mb2616c.

It localises to the cell membrane. This is an uncharacterized protein from Mycobacterium leprae (strain TN).